Consider the following 43-residue polypeptide: Defensin, isoforms B and C (43 aa).

Disulfide bonds link Cys3–Cys34, Cys20–Cys40, and Cys24–Cys42.

It belongs to the invertebrate defensin family. Type 1 subfamily.

It is found in the secreted. In terms of biological role, involved in anti Gram-positive activity of immune hemolymph of Z.atratus. This Zophobas atratus (Giant mealworm beetle) protein is Defensin, isoforms B and C.